Here is a 100-residue protein sequence, read N- to C-terminus: Urease subunit gamma (100 aa).

The protein belongs to the urease gamma subunit family. In terms of assembly, heterotrimer of UreA (gamma), UreB (beta) and UreC (alpha) subunits. Three heterotrimers associate to form the active enzyme.

The protein resides in the cytoplasm. The catalysed reaction is urea + 2 H2O + H(+) = hydrogencarbonate + 2 NH4(+). Its pathway is nitrogen metabolism; urea degradation; CO(2) and NH(3) from urea (urease route): step 1/1. The protein is Urease subunit gamma of Staphylococcus xylosus.